Here is a 182-residue protein sequence, read N- to C-terminus: Large ribosomal subunit protein uL6 (182 aa).

This sequence belongs to the universal ribosomal protein uL6 family. Part of the 50S ribosomal subunit.

Its function is as follows. This protein binds to the 23S rRNA, and is important in its secondary structure. It is located near the subunit interface in the base of the L7/L12 stalk, and near the tRNA binding site of the peptidyltransferase center. The sequence is that of Large ribosomal subunit protein uL6 from Nostoc punctiforme (strain ATCC 29133 / PCC 73102).